The chain runs to 605 residues: LysM domain receptor-like kinase 10 (605 aa).

Positions 1–20 (MFSLPALLIGACAFAAAAVA) are cleaved as a signal peptide. Residues 21–245 (ASGDGCRAGC…GMGNSLSGGA (225 aa)) lie on the Extracellular side of the membrane. Disulfide bonds link C26–C89, C30–C161, and C87–C159. An N-linked (GlcNAc...) asparagine glycan is attached at N44. Residues 115-121 (GGDTYDA) and 142-148 (PPGRIPG) each bind chitin. N154 and N158 each carry an N-linked (GlcNAc...) asparagine glycan. In terms of domain architecture, LysM spans 174–221 (LTYPLWDGETLESVAAQYGFSSPAEMELIRRYNPGMGGVSGKGIVFIP). The N-linked (GlcNAc...) asparagine glycan is linked to N226. A helical membrane pass occupies residues 246–266 (IAGIVIACIAIFIVAIWLIIM). Topologically, residues 267–605 (FYRWQKFRKA…DLRDMDYHPF (339 aa)) are cytoplasmic. A Phosphoserine modification is found at S278. The Protein kinase domain maps to 317-591 (FSMEHKIGQG…RSVVVALMAL (275 aa)). ATP-binding positions include 323 to 331 (IGQGGFGSV) and K344. The active-site Proton acceptor is the D436.

It belongs to the protein kinase superfamily. Ser/Thr protein kinase family.

It is found in the cell membrane. The enzyme catalyses L-seryl-[protein] + ATP = O-phospho-L-seryl-[protein] + ADP + H(+). It catalyses the reaction L-threonyl-[protein] + ATP = O-phospho-L-threonyl-[protein] + ADP + H(+). In Oryza sativa subsp. japonica (Rice), this protein is LysM domain receptor-like kinase 10.